The sequence spans 341 residues: Protein FAM50A (341 aa).

2 disordered regions span residues Met-1 to Gln-27 and Leu-80 to Glu-147. Positions Leu-80–Arg-115 are enriched in basic and acidic residues. Residues Asp-125–Glu-147 are compositionally biased toward acidic residues.

It belongs to the FAM50 family.

It localises to the nucleus. Functionally, probably involved in the regulation of pre-mRNA splicing. The polypeptide is Protein FAM50A (fam50a) (Danio rerio (Zebrafish)).